Reading from the N-terminus, the 230-residue chain is Cytochrome c oxidase subunit 2 (230 aa).

Residues Met1–Ser14 are Mitochondrial intermembrane-facing. The chain crosses the membrane as a helical span at residues Pro15–Met45. The Mitochondrial matrix portion of the chain corresponds to Val46–Gln59. A helical membrane pass occupies residues Glu60 to Met87. Topologically, residues Asp88–Ala230 are mitochondrial intermembrane. Positions 161, 196, 198, 200, 204, and 207 each coordinate Cu cation. Mg(2+) is bound at residue Glu198.

Belongs to the cytochrome c oxidase subunit 2 family. In terms of assembly, component of the cytochrome c oxidase (complex IV, CIV), a multisubunit enzyme composed of 14 subunits. The complex is composed of a catalytic core of 3 subunits MT-CO1, MT-CO2 and MT-CO3, encoded in the mitochondrial DNA, and 11 supernumerary subunits COX4I, COX5A, COX5B, COX6A, COX6B, COX6C, COX7A, COX7B, COX7C, COX8 and NDUFA4, which are encoded in the nuclear genome. The complex exists as a monomer or a dimer and forms supercomplexes (SCs) in the inner mitochondrial membrane with NADH-ubiquinone oxidoreductase (complex I, CI) and ubiquinol-cytochrome c oxidoreductase (cytochrome b-c1 complex, complex III, CIII), resulting in different assemblies (supercomplex SCI(1)III(2)IV(1) and megacomplex MCI(2)III(2)IV(2)). Found in a complex with TMEM177, COA6, COX18, COX20, SCO1 and SCO2. Interacts with TMEM177 in a COX20-dependent manner. Interacts with COX20. Interacts with COX16. Cu cation is required as a cofactor.

Its subcellular location is the mitochondrion inner membrane. It carries out the reaction 4 Fe(II)-[cytochrome c] + O2 + 8 H(+)(in) = 4 Fe(III)-[cytochrome c] + 2 H2O + 4 H(+)(out). Functionally, component of the cytochrome c oxidase, the last enzyme in the mitochondrial electron transport chain which drives oxidative phosphorylation. The respiratory chain contains 3 multisubunit complexes succinate dehydrogenase (complex II, CII), ubiquinol-cytochrome c oxidoreductase (cytochrome b-c1 complex, complex III, CIII) and cytochrome c oxidase (complex IV, CIV), that cooperate to transfer electrons derived from NADH and succinate to molecular oxygen, creating an electrochemical gradient over the inner membrane that drives transmembrane transport and the ATP synthase. Cytochrome c oxidase is the component of the respiratory chain that catalyzes the reduction of oxygen to water. Electrons originating from reduced cytochrome c in the intermembrane space (IMS) are transferred via the dinuclear copper A center (CU(A)) of subunit 2 and heme A of subunit 1 to the active site in subunit 1, a binuclear center (BNC) formed by heme A3 and copper B (CU(B)). The BNC reduces molecular oxygen to 2 water molecules using 4 electrons from cytochrome c in the IMS and 4 protons from the mitochondrial matrix. This is Cytochrome c oxidase subunit 2 (mt-co2) from Oncorhynchus mykiss (Rainbow trout).